The primary structure comprises 227 residues: uncharacterized protein (227 aa).

The first 22 residues, 1-22 (MDSVMRKSLFLLLPLVVTNAHA), serve as a signal peptide directing secretion.

This is an uncharacterized protein from Salmonella typhi.